The sequence spans 710 residues: MKLVFLVLLFLGALGLCLAGRRRSVQWCAVSQPEATKCFQWQRNMRKVRGPPVSCIKRDSPIQCIQAIAENRADAVTLDGGFIYEAGLAPYKLRPVAAEVYGTERQPRTHYYAVAVVKKGGSFQLNELQGLKSCHTGLRRTAGWNVPIGTLRPFLNWTGPPEPIEAAVARFFSASCVPGADKGQFPNLCRLCAGTGENKCAFSSQEPYFSYSGAFKCLRDGAGDVAFIRESTVFEDLSDEAERDEYELLCPDNTRKPVDKFKDCHLARVPSHAVVARSVNGKEDAIWNLLRQAQEKFGKDKSPKFQLFGSPSGQKDLLFKDSAIGFSRVPPRIDSGLYLGSGYFTAIQNLRKSEEEVAARRARVVWCAVGEQELRKCNQWSGLSEGSVTCSSASTTEDCIALVLKGEADAMSLDGGYVYTAGKCGLVPVLAENYKSQQSSDPDPNCVDRPVEGYLAVAVVRRSDTSLTWNSVKGKKSCHTAVDRTAGWNIPMGLLFNQTGSCKFDEYFSQSCAPGSDPRSNLCALCIGDEQGENKCVPNSNERYYGYTGAFRCLAENAGDVAFVKDVTVLQNTDGNNNEAWAKDLKLADFALLCLDGKRKPVTEARSCHLAMAPNHAVVSRMDKVERLKQVLLHQQAKFGRNGSDCPDKFCLFQSETKNLLFNDNTECLARLHGKTTYEKYLGPQYVAGITNLKKCSTSPLLEACEFLRK.

A signal peptide spans 1 to 19 (MKLVFLVLLFLGALGLCLA). Position 10 is a phosphoserine; alternate (Phe-10). Phe-10 carries O-linked (GlcNAc) serine; alternate glycosylation. The segment at 20–24 (GRRRS) is critical for glycosaminoglycan, lipid A, lysozyme and DNA binding. Bactericidal and antifungal activity regions lie at residues 20–29 (GRRRSVQWCA) and 39–49 (FQWQRNMRKVR). An important for full bactericidal and antifungal activities region spans residues 21-22 (RR). Transferrin-like domains follow at residues 25–352 (VQWC…NLRK) and 364–695 (VVWC…NLKK). 2 cysteine pairs are disulfide-bonded: Cys-28–Cys-64 and Cys-38–Cys-55. Interaction with PspA stretches follow at residues 39–46 (FQWQRNMR) and 57–58 (KR). The interaction with lipopolysaccharide stretch occupies residues 39-49 (FQWQRNMRKVR). The tract at residues 46–51 (RKVRGP) is involved in glycosaminoglycan binding. Asp-79 provides a ligand contact to Fe(3+). Lys-92 is an active-site residue. Fe(3+) is bound at residue Tyr-111. Cystine bridges form between Cys-134/Cys-217, Cys-176/Cys-192, Cys-189/Cys-200, and Cys-250/Cys-264. Residues Thr-136, Arg-140, Ala-142, and Gly-143 each coordinate hydrogencarbonate. N-linked (GlcNAc...) asparagine glycosylation is present at Asn-156. Position 211 (Tyr-211) interacts with Fe(3+). His-272 contacts Fe(3+). Ser-278 serves as the catalytic Nucleophile. 2 disulfides stabilise this stretch: Cys-367–Cys-399 and Cys-377–Cys-390. Residues Gln-379 and Ser-391 each participate in a glycyl lysine isopeptide (Lys-Gly) (interchain with G-Cter in ubiquitin) cross-link. Fe(3+) contacts are provided by Asp-414 and Tyr-454. 8 disulfides stabilise this stretch: Cys-424–Cys-705, Cys-446–Cys-668, Cys-478–Cys-553, Cys-502–Cys-696, Cys-512–Cys-526, Cys-523–Cys-536, Cys-594–Cys-608, and Cys-646–Cys-651. The hydrogencarbonate site is built by Thr-480, Arg-484, Ala-486, and Gly-487. Asn-497 is a glycosylation site (N-linked (GlcNAc...) asparagine). Residue Tyr-547 participates in Fe(3+) binding. His-616 serves as a coordination point for Fe(3+). N-linked (GlcNAc...) asparagine glycosylation occurs at Asn-642.

Belongs to the transferrin family. As to quaternary structure, monomer. Found in a complex with LTF, CLU, EPPIN and SEMG1. Found in a complex with MPO and LTF; interacts directly with CP, allows Fe(3+) incorporation into LTF and activation of CP ferroxidase activity. In terms of processing, phosphorylation at Ser-10 activates the transcriptional activity. Phosphorylation at Ser-10 also promotes proteasomal degradation. Alternatively can undergo O-GlcNAcylation at Ser-10. O-GlcNAcylation at Ser-10 inhibits DNA binding and negatively regulates the transcriptional activity. Alternatively can undergo phosphorylation at Ser-10. Post-translationally, poly-N-acetyllactosaminic carbohydrate moiety seems to be needed for TLR4 activation. As to expression, high levels are found in saliva and tears, intermediate levels in serum and plasma, and low levels in urine. In kidney, detected in the distal collecting tubules in the medulla but not in the cortical region or in blood vessels. Detected in peripheral blood neutrophils (at protein level). Isoform 1 and isoform DeltaLf are expressed in breast, prostate, spleen, pancreas, kidney, small intestine, lung, skeletal muscle, uterus, thymus and fetal liver. Isoform 1 is expressed in brain, testis and peripheral blood leukocytes; isoform DeltaLf is barely detectable in these tissues. Isoform DeltaLf is expressed in placenta, liver and ovary; isoform 1 is barely detectable in these tissues. In kidney, isoform 1 is expressed at high levels in the collecting tubules of the medulla but at very low levels in the cortex.

It is found in the secreted. The protein localises to the cytoplasmic granule. It localises to the cytoplasm. Its subcellular location is the nucleus. Transferrins are iron binding transport proteins which can bind two Fe(3+) ions in association with the binding of an anion, usually bicarbonate. Functionally, major iron-binding and multifunctional protein found in exocrine fluids such as breast milk and mucosal secretions. Has antimicrobial activity, which depends on the extracellular cation concentration. Antimicrobial properties include bacteriostasis, which is related to its ability to sequester free iron and thus inhibit microbial growth, as well as direct bactericidal properties leading to the release of lipopolysaccharides from the bacterial outer membrane. Can also prevent bacterial biofilm development in P.aeruginosa infection. Has weak antifungal activity against C.albicans. Has anabolic, differentiating and anti-apoptotic effects on osteoblasts and can also inhibit osteoclastogenesis, possibly playing a role in the regulation of bone growth. Promotes binding of species C adenoviruses to epithelial cells, promoting adenovirus infection. Can inhibit papillomavirus infections. Stimulates the TLR4 signaling pathway leading to NF-kappa-B activation and subsequent pro-inflammatory cytokine production while also interfering with the lipopolysaccharide (LPS)-stimulated TLR4 signaling. Inhibits neutrophil granulocyte migration to sites of apoptosis, when secreted by apoptotic cells. Stimulates VEGFA-mediated endothelial cell migration and proliferation. Binds heparin, chondroitin sulfate and possibly other glycosaminoglycans (GAGs). Also binds specifically to pneumococcal surface protein A (PspA), the lipid A portion of bacterial lipopolysaccharide (LPS), lysozyme and DNA. In terms of biological role, lactoferricin binds to the bacterial surface and is crucial for the bactericidal functions. Has some antiviral activity against papillomavirus infection. N-terminal region shows strong antifungal activity against C.albicans. Contains two BBXB heparin-binding consensus sequences that appear to form the predominate functional GAG-binding site. Its function is as follows. Has antimicrobial activity and is able to permeabilize different ions through liposomal membranes. Has opioid antagonist activity. Shows preference for mu-receptor. Functionally, has opioid antagonist activity. Shows higher degrees of preference for kappa-receptors than for mu-receptors. In terms of biological role, the lactotransferrin transferrin-like domain 1 functions as a serine protease of the peptidase S60 family that cuts arginine rich regions. This function contributes to the antimicrobial activity. Shows a preferential cleavage at -Arg-Ser-Arg-Arg-|- and -Arg-Arg-Ser-Arg-|-, and of Z-Phe-Arg-|-aminomethylcoumarin sites. Its function is as follows. Transcription factor with antiproliferative properties and ability to induce cell cycle arrest. Binds to the DeltaLf response element found in the SKP1, BAX, DCPS, and SELENOH promoters. The sequence is that of Lactotransferrin from Homo sapiens (Human).